The chain runs to 131 residues: Glycine cleavage system H protein (131 aa).

In terms of domain architecture, Lipoyl-binding spans 24-106; the sequence is IATLGISAFA…HGEGWLLKVR (83 aa). Position 65 is an N6-lipoyllysine (Lys65).

The protein belongs to the GcvH family. The glycine cleavage system is composed of four proteins: P, T, L and H. (R)-lipoate is required as a cofactor.

The glycine cleavage system catalyzes the degradation of glycine. The H protein shuttles the methylamine group of glycine from the P protein to the T protein. This Microcystis aeruginosa (strain NIES-843 / IAM M-2473) protein is Glycine cleavage system H protein.